The sequence spans 428 residues: Aerobic C4-dicarboxylate transport protein (428 aa).

The next 9 membrane-spanning stretches (helical) occupy residues 5-27 (LFKS…GHYY), 47-64 (MIIA…IAGM), 77-99 (ALLY…VNVV), 141-163 (VIGA…FGFA), 184-206 (VIFG…AMAF), 216-238 (LVQL…VVVL), 289-311 (VVGL…YLTM), 326-348 (IFHQ…GVTG), and 353-375 (VLAA…ILGI).

It belongs to the dicarboxylate/amino acid:cation symporter (DAACS) (TC 2.A.23) family.

The protein resides in the cell inner membrane. Functionally, responsible for the transport of dicarboxylates such as succinate, fumarate, and malate from the periplasm across the inner membrane. This chain is Aerobic C4-dicarboxylate transport protein (dctA), found in Salmonella typhimurium (strain LT2 / SGSC1412 / ATCC 700720).